The following is a 363-amino-acid chain: tRNA/tmRNA (uracil-C(5))-methyltransferase (363 aa).

5 residues coordinate S-adenosyl-L-methionine: Gln-187, Tyr-215, Asn-220, Glu-236, and Asp-296. Catalysis depends on Cys-321, which acts as the Nucleophile. Catalysis depends on Glu-355, which acts as the Proton acceptor.

The protein belongs to the class I-like SAM-binding methyltransferase superfamily. RNA M5U methyltransferase family. TrmA subfamily.

The catalysed reaction is uridine(54) in tRNA + S-adenosyl-L-methionine = 5-methyluridine(54) in tRNA + S-adenosyl-L-homocysteine + H(+). It carries out the reaction uridine(341) in tmRNA + S-adenosyl-L-methionine = 5-methyluridine(341) in tmRNA + S-adenosyl-L-homocysteine + H(+). Functionally, dual-specificity methyltransferase that catalyzes the formation of 5-methyluridine at position 54 (m5U54) in all tRNAs, and that of position 341 (m5U341) in tmRNA (transfer-mRNA). This Haemophilus influenzae (strain PittEE) protein is tRNA/tmRNA (uracil-C(5))-methyltransferase.